Consider the following 95-residue polypeptide: Small ribosomal subunit protein bS6 (95 aa).

The protein belongs to the bacterial ribosomal protein bS6 family.

Functionally, binds together with bS18 to 16S ribosomal RNA. This Thermoanaerobacter pseudethanolicus (strain ATCC 33223 / 39E) (Clostridium thermohydrosulfuricum) protein is Small ribosomal subunit protein bS6.